A 461-amino-acid chain; its full sequence is Cysteine--tRNA ligase (461 aa).

Cysteine 28 contacts Zn(2+). Residues 30-40 (ITVYDLCHIGH) carry the 'HIGH' region motif. Residues cysteine 209, histidine 234, and glutamate 238 each coordinate Zn(2+). A 'KMSKS' region motif is present at residues 266–270 (KMSKS). Lysine 269 contributes to the ATP binding site.

It belongs to the class-I aminoacyl-tRNA synthetase family. Monomer. Requires Zn(2+) as cofactor.

Its subcellular location is the cytoplasm. It catalyses the reaction tRNA(Cys) + L-cysteine + ATP = L-cysteinyl-tRNA(Cys) + AMP + diphosphate. This chain is Cysteine--tRNA ligase, found in Salmonella agona (strain SL483).